Reading from the N-terminus, the 301-residue chain is GTPase Era (301 aa).

The 169-residue stretch at 7 to 175 (YCGFIAIVGR…AGIVRKHLPE (169 aa)) folds into the Era-type G domain. A G1 region spans residues 15 to 22 (GRPNVGKS). Position 15–22 (15–22 (GRPNVGKS)) interacts with GTP. The G2 stretch occupies residues 41 to 45 (QTTRH). The interval 62–65 (DTPG) is G3. Residues 62-66 (DTPGL) and 124-127 (NKVD) contribute to the GTP site. Residues 124-127 (NKVD) form a G4 region. The tract at residues 154-156 (LSA) is G5. Residues 198–283 (IREKLMRFLG…HLELWVKVKS (86 aa)) enclose the KH type-2 domain.

Belongs to the TRAFAC class TrmE-Era-EngA-EngB-Septin-like GTPase superfamily. Era GTPase family. Monomer.

The protein resides in the cytoplasm. It localises to the cell inner membrane. Its function is as follows. An essential GTPase that binds both GDP and GTP, with rapid nucleotide exchange. Plays a role in 16S rRNA processing and 30S ribosomal subunit biogenesis and possibly also in cell cycle regulation and energy metabolism. The chain is GTPase Era from Enterobacter sp. (strain 638).